Here is a 442-residue protein sequence, read N- to C-terminus: Histidinol dehydrogenase (442 aa).

NAD(+) contacts are provided by Tyr-138, Gln-199, and Asn-222. The substrate site is built by Ser-245, Gln-267, and His-270. Zn(2+)-binding residues include Gln-267 and His-270. Residues Glu-335 and His-336 each act as proton acceptor in the active site. Substrate-binding residues include His-336, Asp-369, Glu-423, and His-428. Residue Asp-369 participates in Zn(2+) binding. A Zn(2+)-binding site is contributed by His-428.

Belongs to the histidinol dehydrogenase family. Zn(2+) serves as cofactor.

The catalysed reaction is L-histidinol + 2 NAD(+) + H2O = L-histidine + 2 NADH + 3 H(+). The protein operates within amino-acid biosynthesis; L-histidine biosynthesis; L-histidine from 5-phospho-alpha-D-ribose 1-diphosphate: step 9/9. Catalyzes the sequential NAD-dependent oxidations of L-histidinol to L-histidinaldehyde and then to L-histidine. This is Histidinol dehydrogenase from Ralstonia nicotianae (strain ATCC BAA-1114 / GMI1000) (Ralstonia solanacearum).